Here is a 395-residue protein sequence, read N- to C-terminus: Univin (395 aa).

A signal peptide spans 1–19; the sequence is MDVSKVLILTLIWLLTADS. The propeptide occupies 20-272; it reads APPDYVTLTR…CSKRNRRNKR (253 aa). Residue N50 is glycosylated (N-linked (GlcNAc...) asparagine). The tract at residues 69–97 is disordered; the sequence is EGAAASRGGETEIGKEEEEDGRPCSETKL. N-linked (GlcNAc...) asparagine glycans are attached at residues N116 and N336. Cystine bridges form between C294/C360, C323/C392, and C327/C394.

It belongs to the TGF-beta family. In terms of assembly, homodimer; disulfide-linked.

It is found in the secreted. In terms of biological role, could have a critical role in early developmental decisions in the sea urchin embryo. This is Univin from Strongylocentrotus purpuratus (Purple sea urchin).